We begin with the raw amino-acid sequence, 163 residues long: Phosphopantetheine adenylyltransferase (163 aa).

S11 serves as a coordination point for substrate. Residues 11–12 and H19 each bind ATP; that span reads SF. K43, L75, and R89 together coordinate substrate. Residues 90 to 92, E100, and 125 to 131 each bind ATP; these read GLR and YSFLSSS.

The protein belongs to the bacterial CoaD family. In terms of assembly, homohexamer. It depends on Mg(2+) as a cofactor.

The protein resides in the cytoplasm. It catalyses the reaction (R)-4'-phosphopantetheine + ATP + H(+) = 3'-dephospho-CoA + diphosphate. It functions in the pathway cofactor biosynthesis; coenzyme A biosynthesis; CoA from (R)-pantothenate: step 4/5. Functionally, reversibly transfers an adenylyl group from ATP to 4'-phosphopantetheine, yielding dephospho-CoA (dPCoA) and pyrophosphate. This is Phosphopantetheine adenylyltransferase from Lysinibacillus sphaericus (strain C3-41).